A 201-amino-acid polypeptide reads, in one-letter code: MDTLVPINVYVKAGIHIGTRHLTKDMKPYVSKIREDGLAIFDIRKIDERLRLASKMLSYYEPNEILVVGRRETAITPIKKFSEITKVKAFPGRYPPGTLTNPQLKYYMEPEVILITDPIMDKNALHDAYESGITILALCDTNHTKNYIDFCIPANNRGSKSLALIYWILAREYLRNRGVIGKDEQLKVPVEEFETKITVEE.

It belongs to the universal ribosomal protein uS2 family.

This Nanoarchaeum equitans (strain Kin4-M) protein is Small ribosomal subunit protein uS2.